Reading from the N-terminus, the 300-residue chain is Rhodopsin (300 aa).

At leucine 1 to methionine 18 the chain is on the extracellular side. Residues tyrosine 19 to valine 43 form a helical membrane-spanning segment. At phenylalanine 44–asparagine 55 the chain is on the cytoplasmic side. The helical transmembrane segment at leucine 56–valine 78 threads the bilayer. The Extracellular segment spans residues threonine 79–cysteine 92. Cysteine 92 and cysteine 168 form a disulfide bridge. The chain crosses the membrane as a helical span at residues glutamine 93–phenylalanine 115. A 'Ionic lock' involved in activated form stabilization motif is present at residues aspartate 116–tyrosine 118. Over aspartate 116–lysine 134 the chain is Cytoplasmic. A helical transmembrane segment spans residues alanine 135–phenylalanine 155. Topologically, residues glycine 156–serine 181 are extracellular. Residues tyrosine 182 to valine 203 traverse the membrane as a helical segment. Residues phenylalanine 204 to lysine 244 are Cytoplasmic-facing. Residues isoleucine 245–valine 266 traverse the membrane as a helical segment. Residues glycine 267 to valine 277 are Extracellular-facing. A helical membrane pass occupies residues tyrosine 278–isoleucine 299. Lysine 287 carries the N6-(retinylidene)lysine modification.

Belongs to the G-protein coupled receptor 1 family. Opsin subfamily. As to quaternary structure, homodimer. Interacts with GNAQ. Post-translationally, contains one covalently linked retinal chromophore.

It is found in the cell projection. It localises to the rhabdomere membrane. Its function is as follows. Photoreceptor required for image-forming vision at low light intensity. Can use both retinal and 3-dehydroretinal as visual pigment. Light-induced isomerization of 11-cis to all-trans retinal triggers a conformational change that activates signaling via G-proteins. Signaling via GNAQ probably mediates the activation of phospholipase C. The polypeptide is Rhodopsin (RHO) (Cambarus maculatus (Freckled crayfish)).